The chain runs to 184 residues: Photosystem I assembly protein Ycf4 (184 aa).

The next 2 helical transmembrane spans lie at phenylalanine 22 to serine 42 and isoleucine 57 to serine 77.

The protein belongs to the Ycf4 family.

Its subcellular location is the plastid. The protein resides in the chloroplast thylakoid membrane. Its function is as follows. Seems to be required for the assembly of the photosystem I complex. The protein is Photosystem I assembly protein Ycf4 of Helianthus annuus (Common sunflower).